The following is a 69-amino-acid chain: U2-agatoxin-Ao1z (69 aa).

The first 20 residues, 1 to 20 (MRAIISLLLISAMVFSMIEA), serve as a signal peptide directing secretion. Residues 21–34 (VPVEEGLQLFEGER) constitute a propeptide that is removed on maturation. 3 disulfide bridges follow: cysteine 37/cysteine 53, cysteine 44/cysteine 58, and cysteine 52/cysteine 68.

This sequence belongs to the neurotoxin 01 (U2-agtx) family. Expressed by the venom gland.

The protein localises to the secreted. Its function is as follows. Insect active toxin causing rapid but reversible paralysis in crickets. No activity shown in mammals. Does not show effect on mammalian voltage-gated calcium channels. The polypeptide is U2-agatoxin-Ao1z (Agelena orientalis (Funnel-web spider)).